Here is a 66-residue protein sequence, read N- to C-terminus: MIRILVLMITFTLMTGSALCSIEQLMRVFGGGSVGGGSRLDINRRVTIVPPEGELSFGYGFRPGFY.

A signal peptide spans 1-20; that stretch reads MIRILVLMITFTLMTGSALC.

Specifically expressed in the ejaculatory bulb and seminal fluid.

Its subcellular location is the secreted. Its function is as follows. Protein component of the posterior mating plug. The polypeptide is Ejaculatory bulb-specific protein 2 (Drosophila melanogaster (Fruit fly)).